The sequence spans 317 residues: Small ribosomal subunit protein RACK1 (317 aa).

7 WD repeats span residues 13–44, 61–91, 103–133, 146–178, 190–220, 231–260, and 281–311; these read GHSG…IMWK, GHSH…RLWD, GHTK…KLWN, SHTE…KVWN, GHTG…MLWD, DGGD…KIWD, and AEPP…RVWQ.

Belongs to the WD repeat G protein beta family. Ribosomal protein RACK1 subfamily.

It is found in the cytoplasm. In terms of biological role, involved in the recruitment, assembly and/or regulation of a variety of signaling molecules. Interacts with a wide variety of proteins and plays a role in many cellular processes. Required for VANGL2 membrane localization, inhibits Wnt signaling and regulates cellular polarization and oriented cell division during gastrulation. This chain is Small ribosomal subunit protein RACK1 (gnb2l1), found in Danio rerio (Zebrafish).